Reading from the N-terminus, the 175-residue chain is Methylated-DNA--protein-cysteine methyltransferase (175 aa).

DNA-binding residues include Tyr-115 and Arg-127. Catalysis depends on Cys-144, which acts as the Nucleophile; methyl group acceptor.

It belongs to the MGMT family.

The protein localises to the nucleus. It carries out the reaction a 6-O-methyl-2'-deoxyguanosine in DNA + L-cysteinyl-[protein] = S-methyl-L-cysteinyl-[protein] + a 2'-deoxyguanosine in DNA. It catalyses the reaction a 4-O-methyl-thymidine in DNA + L-cysteinyl-[protein] = a thymidine in DNA + S-methyl-L-cysteinyl-[protein]. Involved in the cellular defense against the biological effects of O6-methylguanine (O6-MeG) and O4-methylthymine (O4-MeT) in DNA. Repairs the methylated nucleobase in DNA by stoichiometrically transferring the methyl group to a cysteine residue in the enzyme. This is a suicide reaction: the enzyme is irreversibly inactivated. This is Methylated-DNA--protein-cysteine methyltransferase (MGT1) from Candida albicans (strain SC5314 / ATCC MYA-2876) (Yeast).